The following is an 855-amino-acid chain: Replication factor C small subunit (855 aa).

The DOD-type homing endonuclease domain occupies 185–308; the sequence is WLGYFLGGGY…IAYALAGFGI (124 aa).

Belongs to the activator 1 small subunits family. RfcS subfamily. Heteromultimer composed of small subunits (RfcS) and large subunits (RfcL). This protein undergoes a protein self splicing that involves a post-translational excision of the intervening region (intein) followed by peptide ligation.

Functionally, part of the RFC clamp loader complex which loads the PCNA sliding clamp onto DNA. This chain is Replication factor C small subunit (rfcS), found in Pyrococcus horikoshii (strain ATCC 700860 / DSM 12428 / JCM 9974 / NBRC 100139 / OT-3).